The sequence spans 652 residues: DNA ligase (652 aa).

NAD(+)-binding positions include 29–33, 78–79, and Glu-107; these read DSQYD and SL. Lys-109 serves as the catalytic N6-AMP-lysine intermediate. NAD(+) contacts are provided by Arg-130, Glu-164, Lys-278, and Lys-302. Zn(2+) contacts are provided by Cys-395, Cys-398, Cys-413, and Cys-418. A BRCT domain is found at 577–652; that stretch reads STDAQLSGLT…IQDEDWLLNL (76 aa).

The protein belongs to the NAD-dependent DNA ligase family. LigA subfamily. Requires Mg(2+) as cofactor. Mn(2+) is required as a cofactor.

The enzyme catalyses NAD(+) + (deoxyribonucleotide)n-3'-hydroxyl + 5'-phospho-(deoxyribonucleotide)m = (deoxyribonucleotide)n+m + AMP + beta-nicotinamide D-nucleotide.. DNA ligase that catalyzes the formation of phosphodiester linkages between 5'-phosphoryl and 3'-hydroxyl groups in double-stranded DNA using NAD as a coenzyme and as the energy source for the reaction. It is essential for DNA replication and repair of damaged DNA. The protein is DNA ligase of Streptococcus agalactiae serotype V (strain ATCC BAA-611 / 2603 V/R).